The chain runs to 45 residues: Large ribosomal subunit protein bL34 (45 aa).

Belongs to the bacterial ribosomal protein bL34 family.

This is Large ribosomal subunit protein bL34 from Streptomyces avermitilis (strain ATCC 31267 / DSM 46492 / JCM 5070 / NBRC 14893 / NCIMB 12804 / NRRL 8165 / MA-4680).